A 160-amino-acid chain; its full sequence is Lymphocyte antigen 96 (160 aa).

The first 18 residues, 1-18, serve as a signal peptide directing secretion; it reads MLPFLFFSTLFSSIFTEA. Disulfide bonds link cysteine 25-cysteine 51, cysteine 37-cysteine 148, and cysteine 95-cysteine 105. Asparagine 26 carries N-linked (GlcNAc...) asparagine glycosylation. N-linked (GlcNAc...) asparagine glycosylation occurs at asparagine 114. Positions 119 to 123 are interaction with lipopolysaccharide; that stretch reads FSFKG.

As to quaternary structure, heterogeneous homomer formed from homodimers; disulfide-linked. Belongs to the lipopolysaccharide (LPS) receptor, a multi-protein complex containing at least CD14, LY96 and TLR4. Binds to the extracellular domains of TLR2 and TLR4. Ligand binding induces interaction with TLR4 and oligomerization of the complex. In terms of processing, N-glycosylated; high-mannose.

The protein resides in the secreted. It localises to the extracellular space. In terms of biological role, binds bacterial lipopolysaccharide (LPS). Cooperates with TLR4 in the innate immune response to bacterial lipopolysaccharide (LPS), and with TLR2 in the response to cell wall components from Gram-positive and Gram-negative bacteria. Enhances TLR4-dependent activation of NF-kappa-B. Cells expressing both LY96 and TLR4, but not TLR4 alone, respond to LPS. In Homo sapiens (Human), this protein is Lymphocyte antigen 96 (LY96).